Reading from the N-terminus, the 765-residue chain is LPS-assembly protein LptD (765 aa).

The N-terminal stretch at 1–18 (MQIRYFLALSLLPQVVLA) is a signal peptide.

This sequence belongs to the LptD family. As to quaternary structure, component of the lipopolysaccharide transport and assembly complex. Interacts with LptE and LptA.

It is found in the cell outer membrane. In terms of biological role, together with LptE, is involved in the assembly of lipopolysaccharide (LPS) at the surface of the outer membrane. The protein is LPS-assembly protein LptD of Shewanella sp. (strain ANA-3).